Consider the following 138-residue polypeptide: Large ribosomal subunit protein uL16 (138 aa).

Belongs to the universal ribosomal protein uL16 family. Part of the 50S ribosomal subunit.

Functionally, binds 23S rRNA and is also seen to make contacts with the A and possibly P site tRNAs. In Corynebacterium kroppenstedtii (strain DSM 44385 / JCM 11950 / CIP 105744 / CCUG 35717), this protein is Large ribosomal subunit protein uL16.